Here is a 309-residue protein sequence, read N- to C-terminus: Aromatic prenyltransferase (309 aa).

This sequence belongs to the aromatic prenyltransferase family.

Prenyltransferase that attaches isoprenoid moieties to carbon atoms of aromatic substrates in an enzyme-catalyzed Friedel-Crafts reaction. Shows specificity for dimethylallyl diphosphate (DMAPP) and does not accept geranyl diphosphate (GPP) or isopentenyl diphosphate (IPP). Prenylates the artificial substrate 2,7-dihydroxynaphthalene (2,7-DHN), as well as dihydrophenazine-1-carboxylic acid and 4-hydroxybenzoic acid at lower levels. Only traces of products are detected with aspulvinone E or flaviolin as substrates; and no product is formed with L-tryptophan, L-tyrosine, or 4-hydroxyphenylpyruvate. Ptf seems no to be involved in the prenylation reaction in the biosynthesis of aspulvinone H and J and the physiological function of ptf remains unknown. This Botryotinia fuckeliana (strain B05.10) (Noble rot fungus) protein is Aromatic prenyltransferase.